Consider the following 354-residue polypeptide: Ribosomal RNA large subunit methyltransferase K (354 aa).

Belongs to the methyltransferase superfamily.

The protein resides in the cytoplasm. It carries out the reaction guanosine(2069) in 23S rRNA + S-adenosyl-L-methionine = N(2)-methylguanosine(2069) in 23S rRNA + S-adenosyl-L-homocysteine + H(+). Its function is as follows. Specifically methylates the guanine in position 2069 (m7G2069) of 23S rRNA. In Neisseria meningitidis serogroup B (strain ATCC BAA-335 / MC58), this protein is Ribosomal RNA large subunit methyltransferase K (rlmK).